The following is a 129-amino-acid chain: ASNFTQFVLVNDGGTGNVTVAPSNFANGVAEWISSNSRSQAYKVTCSVRQSSAQNRKYTIKVEVPKVATQTVGGVELPVAAWRSYLNLELTIPIFATNSDCELIVKAMQGLLKDGNPIPSAIAANSGIY.

The interval 31 to 104 (EWISSNSRSQ…FATNSDCELI (74 aa)) is viral RNA-binding.

It belongs to the Leviviricetes capsid protein family. As to quaternary structure, homodimer. The capsid proteins form dimers that assemble by group of 5. Twelve such pentamers are linked together with free dimers. The homodimers binds to the viral RNA via an operator hairpin, but also to many other RNA sequences in the viral genome; this interaction probably shifts the virus from the replicative to the assembly phase and ensures specific encapsidation of the viral genome.

The protein localises to the virion. Capsid protein self-assembles to form an icosahedral capsid with a T=3 symmetry, about 26 nm in diameter, and consisting of 89 capsid proteins dimers (178 capsid proteins). Involved in viral genome encapsidation through the interaction between a capsid protein dimer and the multiple packaging signals present in the RNA genome. The capsid also contains 1 copy of the A2 maturation protein. In terms of biological role, acts as a translational repressor of viral replicase synthesis late in infection. This latter function is the result of capsid protein interaction with an RNA hairpin which contains the replicase ribosome-binding site. This chain is Capsid protein, found in Enterobacteria phage f2 (Bacteriophage f2).